The sequence spans 725 residues: NAD(+) hydrolase SARM1 (725 aa).

The transit peptide at Met1–Arg27 directs the protein to the mitochondrion. An ARM 1 repeat occupies Glu60 to Glu100. NAD(+) contacts are provided by residues Trp103, Arg110, Glu149–Arg158, and His191–Lys194. ARM repeat units follow at residues Gln114–Val153, Glu155–Lys194, Glu197–Met236, Gly238–Asn281, Lys282–Asp315, Ala316–Val355, and Lys360–Pro403. 2 consecutive SAM domains span residues Trp413 to Phe477 and Cys483 to Ser549. 2 positions are modified to phosphoserine: Ser549 and Ser559. Residues Asp561–Ser704 form the TIR domain. NAD(+)-binding positions include Arg570 to Arg571 and Glu600. Glu643 is an active-site residue. The tract at residues Ser705–Thr725 is disordered.

Belongs to the SARM1 family. Homooctamer; forms an octameric ring via SAM domains. Interacts with TICAM1/TRIF and thereby interferes with TICAM1/TRIF function. Interacts with MAPK10/JNK3 and SDC2 (via cytoplasmic domain). Phosphorylation at Ser-549 by JNK kinases (MAPK8, MAPK9 and /or MAPK10) enhance the NAD(+) hydrolase (NADase) activity. Phosphorylation at Ser-549 and subsequent activation takes place in response to oxidative stress conditions and inhibits mitochondrial respiration. As to expression, highest expression seen in the spleen and the brain, followed by lung, kidney, liver and other tissues.

The protein localises to the cytoplasm. Its subcellular location is the cell projection. It localises to the axon. The protein resides in the dendrite. It is found in the synapse. The protein localises to the mitochondrion. It catalyses the reaction NAD(+) + H2O = ADP-D-ribose + nicotinamide + H(+). The enzyme catalyses NAD(+) = cyclic ADP-beta-D-ribose + nicotinamide + H(+). It carries out the reaction NADP(+) + H2O = ADP-D-ribose 2'-phosphate + nicotinamide + H(+). With respect to regulation, autoinhibited: in the inactive state, the enzymatic TIR domain is held apart by the autoinhibiting ARM repeats. NAD(+)-binding to ARM repeats maintains an inactive state by promoting interaction between ARM repeats and the TIR domain, thereby facilitating inhibition of the enzymatic TIR domain. Following activation, possibly by nicotinamide mononucleotide (NMN), auto-inhibitory interactions are released, allowing self-association of the TIR domains and subsequent activation of the NAD(+) hydrolase (NADase) activity. Self-association of TIR domains is facilitated by the octamer of SAM domains. NAD(+) hydrolase, which plays a key role in axonal degeneration following injury by regulating NAD(+) metabolism. Acts as a negative regulator of MYD88- and TRIF-dependent toll-like receptor signaling pathway by promoting Wallerian degeneration, an injury-induced form of programmed subcellular death which involves degeneration of an axon distal to the injury site. Wallerian degeneration is triggered by NAD(+) depletion: in response to injury, SARM1 is activated and catalyzes cleavage of NAD(+) into ADP-D-ribose (ADPR), cyclic ADPR (cADPR) and nicotinamide; NAD(+) cleavage promoting cytoskeletal degradation and axon destruction. Also able to hydrolyze NADP(+), but not other NAD(+)-related molecules. Can activate neuronal cell death in response to stress. Regulates dendritic arborization through the MAPK4-JNK pathway. Involved in innate immune response: inhibits both TICAM1/TRIF- and MYD88-dependent activation of JUN/AP-1, TRIF-dependent activation of NF-kappa-B and IRF3, and the phosphorylation of MAPK14/p38. The polypeptide is NAD(+) hydrolase SARM1 (Sus scrofa (Pig)).